Consider the following 731-residue polypeptide: Elongation factor 2 (731 aa).

In terms of domain architecture, tr-type G spans 19-234 (EYIRNIGICA…DIIDYCNEGK (216 aa)). Residues 28-35 (AHIDHGKT), 94-98 (DTPGH), and 148-151 (NKVD) contribute to the GTP site. His-598 is subject to Diphthamide.

This sequence belongs to the TRAFAC class translation factor GTPase superfamily. Classic translation factor GTPase family. EF-G/EF-2 subfamily.

It is found in the cytoplasm. Its function is as follows. Catalyzes the GTP-dependent ribosomal translocation step during translation elongation. During this step, the ribosome changes from the pre-translocational (PRE) to the post-translocational (POST) state as the newly formed A-site-bound peptidyl-tRNA and P-site-bound deacylated tRNA move to the P and E sites, respectively. Catalyzes the coordinated movement of the two tRNA molecules, the mRNA and conformational changes in the ribosome. The polypeptide is Elongation factor 2 (Methanobrevibacter ruminantium (strain ATCC 35063 / DSM 1093 / JCM 13430 / OCM 146 / M1) (Methanobacterium ruminantium)).